The following is a 355-amino-acid chain: Peptide chain release factor 1 (355 aa).

Q233 is modified (N5-methylglutamine).

Belongs to the prokaryotic/mitochondrial release factor family. Methylated by PrmC. Methylation increases the termination efficiency of RF1.

Its subcellular location is the cytoplasm. Peptide chain release factor 1 directs the termination of translation in response to the peptide chain termination codons UAG and UAA. The polypeptide is Peptide chain release factor 1 (Syntrophomonas wolfei subsp. wolfei (strain DSM 2245B / Goettingen)).